Consider the following 342-residue polypeptide: Flavanone 3-dioxygenase 2 (342 aa).

Residues glutamine 193–proline 293 enclose the Fe2OG dioxygenase domain. Fe cation-binding residues include histidine 217, aspartate 219, and histidine 274. Arginine 284 contacts 2-oxoglutarate.

The protein belongs to the iron/ascorbate-dependent oxidoreductase family. It depends on Fe(2+) as a cofactor. L-ascorbate serves as cofactor. Expressed in roots, leaves and stems. Expressed at low levels in seeds.

The catalysed reaction is a (2S)-flavan-4-one + 2-oxoglutarate + O2 = a (2R,3R)-dihydroflavonol + succinate + CO2. The protein operates within secondary metabolite biosynthesis; flavonoid biosynthesis. In terms of biological role, catalyzes the 3-beta-hydroxylation of 2S-flavanones to 2R,3R-dihydroflavonols which are intermediates in the biosynthesis of flavonols, anthocyanidins, catechins and proanthocyanidins in plants. Converts (2S)-eriodictyol to (+)-taxifolin and (2S)-naringenin to (+)-(2R/3R)-dihydrokaempferol in vitro. The polypeptide is Flavanone 3-dioxygenase 2 (Oryza sativa subsp. japonica (Rice)).